The primary structure comprises 178 residues: SsrA-binding protein (178 aa).

The interval 1 to 28 (MAKKSTPVDSGRSKGKKASAPRGGGPAV) is disordered.

Belongs to the SmpB family.

Its subcellular location is the cytoplasm. Required for rescue of stalled ribosomes mediated by trans-translation. Binds to transfer-messenger RNA (tmRNA), required for stable association of tmRNA with ribosomes. tmRNA and SmpB together mimic tRNA shape, replacing the anticodon stem-loop with SmpB. tmRNA is encoded by the ssrA gene; the 2 termini fold to resemble tRNA(Ala) and it encodes a 'tag peptide', a short internal open reading frame. During trans-translation Ala-aminoacylated tmRNA acts like a tRNA, entering the A-site of stalled ribosomes, displacing the stalled mRNA. The ribosome then switches to translate the ORF on the tmRNA; the nascent peptide is terminated with the 'tag peptide' encoded by the tmRNA and targeted for degradation. The ribosome is freed to recommence translation, which seems to be the essential function of trans-translation. The protein is SsrA-binding protein of Corynebacterium urealyticum (strain ATCC 43042 / DSM 7109).